The primary structure comprises 167 residues: Small ribosomal subunit protein uS5 (167 aa).

The 64-residue stretch at 11-74 (LQEKLIAVNR…EKARRAMINV (64 aa)) folds into the S5 DRBM domain.

Belongs to the universal ribosomal protein uS5 family. Part of the 30S ribosomal subunit. Contacts proteins S4 and S8.

In terms of biological role, with S4 and S12 plays an important role in translational accuracy. Located at the back of the 30S subunit body where it stabilizes the conformation of the head with respect to the body. The polypeptide is Small ribosomal subunit protein uS5 (Yersinia enterocolitica serotype O:8 / biotype 1B (strain NCTC 13174 / 8081)).